Reading from the N-terminus, the 124-residue chain is Small ribosomal subunit protein uS12 (124 aa).

A disordered region spans residues 1–23; the sequence is MATINQLVRKPRRSKVTKSNSAA. Asp89 bears the 3-methylthioaspartic acid mark.

Belongs to the universal ribosomal protein uS12 family. Part of the 30S ribosomal subunit. Contacts proteins S8 and S17. May interact with IF1 in the 30S initiation complex.

With S4 and S5 plays an important role in translational accuracy. Its function is as follows. Interacts with and stabilizes bases of the 16S rRNA that are involved in tRNA selection in the A site and with the mRNA backbone. Located at the interface of the 30S and 50S subunits, it traverses the body of the 30S subunit contacting proteins on the other side and probably holding the rRNA structure together. The combined cluster of proteins S8, S12 and S17 appears to hold together the shoulder and platform of the 30S subunit. The polypeptide is Small ribosomal subunit protein uS12 (Pseudoalteromonas translucida (strain TAC 125)).